A 75-amino-acid polypeptide reads, in one-letter code: Protein myomixer (75 aa).

The Cytoplasmic portion of the chain corresponds to 1 to 5 (MPAVF). The helical transmembrane segment at 6–28 (LLLRSLVVRLFGSRLAASGVQLL) threads the bilayer. At 29–75 (RRILTTATGHLGTVLRNIWERISSQQSKEAILGCVLCLLNMHKKVDN) the chain is on the extracellular side. An AxLyCxL motif is present at residues 58–67 (AILGCVLCLL).

It belongs to the MYMX family. As to expression, specifically expressed in the developing myotome.

It is found in the cell membrane. In terms of biological role, myoblast-specific protein that mediates myoblast fusion, an essential step for the formation of multi-nucleated muscle fibers. Involved in membrane fusion downstream of the lipid mixing step mediated by mymk. Acts by generating membrane stresses via its extracellular C-terminus, leading to drive fusion pore formation. This chain is Protein myomixer, found in Danio rerio (Zebrafish).